The primary structure comprises 155 residues: Ribonuclease H (155 aa).

The region spanning 4–145 (QQKVVEIYTD…ADALARKAIA (142 aa)) is the RNase H type-1 domain. Mg(2+)-binding residues include D13, E51, D73, and D137.

This sequence belongs to the RNase H family. In terms of assembly, monomer. Requires Mg(2+) as cofactor.

Its subcellular location is the cytoplasm. It carries out the reaction Endonucleolytic cleavage to 5'-phosphomonoester.. Its function is as follows. Endonuclease that specifically degrades the RNA of RNA-DNA hybrids. The protein is Ribonuclease H of Bartonella tribocorum (strain CIP 105476 / IBS 506).